We begin with the raw amino-acid sequence, 436 residues long: GTPase Der (436 aa).

2 EngA-type G domains span residues 4–167 (PVVA…KNLP) and 176–351 (VQFC…ENHA). GTP is bound by residues 10-17 (GRPNVGKS), 57-61 (DTGGI), 119-122 (NKLD), 182-189 (GRPNVGKS), 229-233 (DTAGM), and 294-297 (NKWD). Positions 352–436 (MRVQTNILND…PIKIFARARK (85 aa)) constitute a KH-like domain.

Belongs to the TRAFAC class TrmE-Era-EngA-EngB-Septin-like GTPase superfamily. EngA (Der) GTPase family. In terms of assembly, associates with the 50S ribosomal subunit.

Its function is as follows. GTPase that plays an essential role in the late steps of ribosome biogenesis. This Bacillus pumilus (strain SAFR-032) protein is GTPase Der.